A 200-amino-acid chain; its full sequence is Holliday junction branch migration complex subunit RuvA (200 aa).

The tract at residues 1–64 (MIGHLRGIIV…EDAHTLYGFH (64 aa)) is domain I. Positions 65-143 (NDHERRLFRA…RWHTNDTPSP (79 aa)) are domain II. Residues 133-152 (SRWHTNDTPSPEGLRSSNTQ) are disordered. A flexible linker region spans residues 144–148 (EGLRS). The interval 149–200 (SNTQPTQDAISALMALGYKPQEAKRAIDAIQKPDLSAETLIRLALKQMVLGT) is domain III.

It belongs to the RuvA family. Homotetramer. Forms an RuvA(8)-RuvB(12)-Holliday junction (HJ) complex. HJ DNA is sandwiched between 2 RuvA tetramers; dsDNA enters through RuvA and exits via RuvB. An RuvB hexamer assembles on each DNA strand where it exits the tetramer. Each RuvB hexamer is contacted by two RuvA subunits (via domain III) on 2 adjacent RuvB subunits; this complex drives branch migration. In the full resolvosome a probable DNA-RuvA(4)-RuvB(12)-RuvC(2) complex forms which resolves the HJ.

It is found in the cytoplasm. In terms of biological role, the RuvA-RuvB-RuvC complex processes Holliday junction (HJ) DNA during genetic recombination and DNA repair, while the RuvA-RuvB complex plays an important role in the rescue of blocked DNA replication forks via replication fork reversal (RFR). RuvA specifically binds to HJ cruciform DNA, conferring on it an open structure. The RuvB hexamer acts as an ATP-dependent pump, pulling dsDNA into and through the RuvAB complex. HJ branch migration allows RuvC to scan DNA until it finds its consensus sequence, where it cleaves and resolves the cruciform DNA. The sequence is that of Holliday junction branch migration complex subunit RuvA from Coxiella burnetii (strain Dugway 5J108-111).